We begin with the raw amino-acid sequence, 168 residues long: Large ribosomal subunit protein uL10 (168 aa).

It belongs to the universal ribosomal protein uL10 family. Part of the ribosomal stalk of the 50S ribosomal subunit. The N-terminus interacts with L11 and the large rRNA to form the base of the stalk. The C-terminus forms an elongated spine to which L12 dimers bind in a sequential fashion forming a multimeric L10(L12)X complex.

Functionally, forms part of the ribosomal stalk, playing a central role in the interaction of the ribosome with GTP-bound translation factors. This chain is Large ribosomal subunit protein uL10 (rplJ), found in Buchnera aphidicola subsp. Baizongia pistaciae (strain Bp).